The primary structure comprises 65 residues: Translational regulator CsrA (65 aa).

Belongs to the CsrA/RsmA family. Homodimer; the beta-strands of each monomer intercalate to form a hydrophobic core, while the alpha-helices form wings that extend away from the core.

It is found in the cytoplasm. Functionally, a key translational regulator that binds mRNA to regulate translation initiation and/or mRNA stability. Mediates global changes in gene expression, shifting from rapid growth to stress survival by linking envelope stress, the stringent response and the catabolite repression systems. Usually binds in the 5'-UTR; binding at or near the Shine-Dalgarno sequence prevents ribosome-binding, repressing translation, binding elsewhere in the 5'-UTR can activate translation and/or stabilize the mRNA. Its function is antagonized by small RNA(s). The chain is Translational regulator CsrA from Pseudomonas putida (strain ATCC 47054 / DSM 6125 / CFBP 8728 / NCIMB 11950 / KT2440).